The chain runs to 460 residues: Diguanylate cyclase DosC (460 aa).

Residue histidine 98 coordinates heme. Positions 325–458 (TPLSVLIIDV…GRNRVELWKA (134 aa)) constitute a GGDEF domain. Aspartate 333 contributes to the Mg(2+) binding site. 2 residues coordinate substrate: asparagine 341 and aspartate 350. Aspartate 376 contacts Mg(2+). Aspartate 376 (proton acceptor) is an active-site residue.

It depends on heme as a cofactor. Requires Mg(2+) as cofactor.

The catalysed reaction is 2 GTP = 3',3'-c-di-GMP + 2 diphosphate. It participates in purine metabolism; 3',5'-cyclic di-GMP biosynthesis. In terms of biological role, globin-coupled heme-based oxygen sensor protein displaying diguanylate cyclase (DGC) activity in response to oxygen availability. Thus, catalyzes the synthesis of cyclic diguanylate (c-di-GMP) via the condensation of 2 GTP molecules. Cyclic-di-GMP is a second messenger which controls cell surface-associated traits in bacteria. This is Diguanylate cyclase DosC (dosC) from Shigella sonnei (strain Ss046).